The primary structure comprises 293 residues: Ribonuclease P/MRP protein subunit RPP1 (293 aa).

It belongs to the eukaryotic/archaeal RNase P protein component 3 family. As to quaternary structure, component of nuclear RNase P and RNase MRP complexes. RNase P consists of an RNA moiety and at least 9 protein subunits including POP1, POP3, POP4, POP5, POP6, POP7, POP8, RPP1 and RPR2. RNase MRP complex consists of an RNA moiety and at least 10 protein subunits including POP1, POP3, POP4, POP5, POP6, POP7, POP8, RMP1, RPP1 and SNM1, many of which are shared with the RNase P complex.

It localises to the nucleus. The enzyme catalyses Endonucleolytic cleavage of RNA, removing 5'-extranucleotides from tRNA precursor.. Its function is as follows. Component of ribonuclease P, a protein complex that generates mature tRNA molecules by cleaving their 5'-ends. Also a component of RNase MRP, which cleaves pre-rRNA sequences. This chain is Ribonuclease P/MRP protein subunit RPP1 (RPP1), found in Saccharomyces cerevisiae (strain ATCC 204508 / S288c) (Baker's yeast).